The following is a 145-amino-acid chain: 3-hydroxyacyl-[acyl-carrier-protein] dehydratase FabZ (145 aa).

The active site involves His-47.

The protein belongs to the thioester dehydratase family. FabZ subfamily.

It is found in the cytoplasm. It catalyses the reaction a (3R)-hydroxyacyl-[ACP] = a (2E)-enoyl-[ACP] + H2O. In terms of biological role, involved in unsaturated fatty acids biosynthesis. Catalyzes the dehydration of short chain beta-hydroxyacyl-ACPs and long chain saturated and unsaturated beta-hydroxyacyl-ACPs. The polypeptide is 3-hydroxyacyl-[acyl-carrier-protein] dehydratase FabZ (Vesicomyosocius okutanii subsp. Calyptogena okutanii (strain HA)).